Reading from the N-terminus, the 431-residue chain is Enolase (431 aa).

Residue Gln-167 participates in (2R)-2-phosphoglycerate binding. Glu-209 (proton donor) is an active-site residue. Mg(2+) contacts are provided by Asp-246, Glu-289, and Asp-316. Residues Lys-341, Arg-370, Ser-371, and Lys-392 each contribute to the (2R)-2-phosphoglycerate site. Catalysis depends on Lys-341, which acts as the Proton acceptor.

The protein belongs to the enolase family. Component of the RNA degradosome, a multiprotein complex involved in RNA processing and mRNA degradation. The cofactor is Mg(2+).

The protein localises to the cytoplasm. It is found in the secreted. The protein resides in the cell surface. It carries out the reaction (2R)-2-phosphoglycerate = phosphoenolpyruvate + H2O. Its pathway is carbohydrate degradation; glycolysis; pyruvate from D-glyceraldehyde 3-phosphate: step 4/5. In terms of biological role, catalyzes the reversible conversion of 2-phosphoglycerate (2-PG) into phosphoenolpyruvate (PEP). It is essential for the degradation of carbohydrates via glycolysis. The sequence is that of Enolase from Shewanella woodyi (strain ATCC 51908 / MS32).